Reading from the N-terminus, the 453-residue chain is Protein FAM117A (453 aa).

Gly residues predominate over residues 1–25; that stretch reads MAGAAAGGRGGGAWGPGRGGAGGLR. A disordered region spans residues 1–45; it reads MAGAAAGGRGGGAWGPGRGGAGGLRRGCSPPAPAGSPRAGLQPLR. 2 positions are modified to phosphoserine: S29 and S67. Residues 149 to 175 are a coiled coil; sequence TDHRKEISKLKQQLQRTKLSRSGKEKE. A disordered region spans residues 159 to 201; it reads KQQLQRTKLSRSGKEKERGSPLLGDHAVRGALRASPPSFPSGS. Phosphoserine occurs at positions 178, 193, 201, and 213. Residues 269–278 show a composition bias toward low complexity; sequence SSPSMSLASP. Residues 269 to 320 form a disordered region; sequence SSPSMSLASPQPCGLASHEEHRGAAEELASTPNDKASSPGHPAFLEDGSPSP. T299 is modified (phosphothreonine). A phosphoserine mark is found at S319 and S327. T354 carries the phosphothreonine modification. Residues 406 to 416 are compositionally biased toward pro residues; it reads GSPLPPASPRP. The disordered stretch occupies residues 406-453; sequence GSPLPPASPRPPPRKDPEASKASPLPFEPWQRTPPSEEPVLFQSSLMV. A phosphoserine mark is found at S413 and S428.

The protein belongs to the FAM117 family.

The chain is Protein FAM117A (FAM117A) from Homo sapiens (Human).